A 474-amino-acid chain; its full sequence is MVQQRHVLLITYPAQGHINPALQFAQRLLRMGIQVTLATSVYALSRMKKSSGSTPKGLTFATFSDGYDDGFRPKGVDHTEYMSSLAKQGSNTLRNVINTSADQGCPVTCLVYTLLLPWAATVARECHIPSALLWIQPVAVMDIYYYYFRGYEDDVKNNSNDPTWSIQFPGLPSMKAKDLPSFILPSSDNIYSFALPTFKKQLETLDEEERPKVLVNTFDALEPQALKAIESYNLIAIGPLTPSAFLDGKDPSETSFSGDLFQKSKDYKEWLNSRPAGSVVYVSFGSLLTLPKQQMEEIARGLLKSGRPFLWVIRAKENGEEEKEEDRLICMEELEEQGMIVPWCSQIEVLTHPSLGCFVTHCGWNSTLETLVCGVPVVAFPHWTDQGTNAKLIEDVWETGVRVVPNEDGTVESDEIKRCIETVMDDGEKGVELKRNAKKWKELAREAMQEDGSSDKNLKAFVEDAGKGYQAESN.

The transit peptide at 1–45 (MVQQRHVLLITYPAQGHINPALQFAQRLLRMGIQVTLATSVYALS) directs the protein to the chloroplast. His-17 (proton acceptor) is an active-site residue. An an anthocyanidin-binding site is contributed by His-17. UDP-alpha-D-glucose-binding residues include Gln-346, His-361, Trp-364, Asn-365, Ser-366, Glu-369, Asp-385, and Gln-386.

It belongs to the UDP-glycosyltransferase family. Ubiquitous.

It is found in the plastid. The protein localises to the chloroplast. It carries out the reaction crocetin + UDP-alpha-D-glucose = beta-D-glucosyl crocetin + UDP. The catalysed reaction is beta-D-glucosyl crocetin + UDP-alpha-D-glucose = bis(beta-D-glucosyl) crocetin + UDP. The enzyme catalyses beta-D-gentiobiosyl crocetin + UDP-alpha-D-glucose = beta-D-gentiobiosyl beta-D-glucosyl crocetin + UDP. Functionally, glucosyltransferase acting on a broad range of substrates, including crocetin, 4-coumaric acid, caffeic acid and ferulic acid. No activity with indol-3-acetic acid, bixin and norbixin, and no formation of O-glucosides. Involved with UGT94E5 in sequential glycosylation of crocetin to crocin (bis(beta-D-gentiobiosyl) crocetin). This Gardenia jasminoides (Cape jasmine) protein is Crocetin glucosyltransferase, chloroplastic (UGT75L6).